Here is a 361-residue protein sequence, read N- to C-terminus: Histidinol-phosphate aminotransferase (361 aa).

Lys219 carries the post-translational modification N6-(pyridoxal phosphate)lysine.

Belongs to the class-II pyridoxal-phosphate-dependent aminotransferase family. Histidinol-phosphate aminotransferase subfamily. As to quaternary structure, homodimer. Requires pyridoxal 5'-phosphate as cofactor.

It carries out the reaction L-histidinol phosphate + 2-oxoglutarate = 3-(imidazol-4-yl)-2-oxopropyl phosphate + L-glutamate. The protein operates within amino-acid biosynthesis; L-histidine biosynthesis; L-histidine from 5-phospho-alpha-D-ribose 1-diphosphate: step 7/9. In Cereibacter sphaeroides (strain ATCC 17029 / ATH 2.4.9) (Rhodobacter sphaeroides), this protein is Histidinol-phosphate aminotransferase.